Reading from the N-terminus, the 292-residue chain is Protein-L-isoaspartate O-methyltransferase (292 aa).

The disordered stretch occupies residues M1–A76. The segment covering N28 to Q48 has biased composition (polar residues). The active site involves S138.

It belongs to the methyltransferase superfamily. L-isoaspartyl/D-aspartyl protein methyltransferase family.

It is found in the cytoplasm. It catalyses the reaction [protein]-L-isoaspartate + S-adenosyl-L-methionine = [protein]-L-isoaspartate alpha-methyl ester + S-adenosyl-L-homocysteine. Functionally, catalyzes the methyl esterification of L-isoaspartyl residues in peptides and proteins that result from spontaneous decomposition of normal L-aspartyl and L-asparaginyl residues. It plays a role in the repair and/or degradation of damaged proteins. This is Protein-L-isoaspartate O-methyltransferase from Janthinobacterium sp. (strain Marseille) (Minibacterium massiliensis).